Reading from the N-terminus, the 126-residue chain is Acidic phospholipase A2 S1E6-a (126 aa).

The N-terminal stretch at 1-3 is a signal peptide; sequence VEG. Intrachain disulfides connect C29–C119, C31–C47, C46–C98, C52–C126, C53–C91, C60–C84, and C78–C89. Ca(2+) contacts are provided by Y30, G32, and G34. H50 is an active-site residue. D51 lines the Ca(2+) pocket. D92 is an active-site residue.

In terms of assembly, homodimer. Ca(2+) serves as cofactor. As to expression, expressed by the venom gland.

Its subcellular location is the secreted. It carries out the reaction a 1,2-diacyl-sn-glycero-3-phosphocholine + H2O = a 1-acyl-sn-glycero-3-phosphocholine + a fatty acid + H(+). Its function is as follows. Snake venom phospholipase A2 (PLA2) that inhibits ADP-induced platelet aggregation. PLA2 catalyzes the calcium-dependent hydrolysis of the 2-acyl groups in 3-sn-phosphoglycerides. This chain is Acidic phospholipase A2 S1E6-a, found in Calloselasma rhodostoma (Malayan pit viper).